The chain runs to 338 residues: Probable arabinan endo-1,5-alpha-L-arabinosidase A (338 aa).

Residues 1-20 (MRASFVVTAPLLAAAVHGYA) form the signal peptide. D33 serves as the catalytic Proton acceptor. The active-site Proton donor is E217.

Belongs to the glycosyl hydrolase 43 family.

The protein localises to the secreted. The enzyme catalyses Endohydrolysis of (1-&gt;5)-alpha-arabinofuranosidic linkages in (1-&gt;5)-arabinans.. Its pathway is glycan metabolism; L-arabinan degradation. In terms of biological role, endo-1,5-alpha-L-arabinanase involved in degradation of pectin. Its preferred substrate is linear 1,5-alpha-L-arabinan. The protein is Probable arabinan endo-1,5-alpha-L-arabinosidase A (abnA) of Aspergillus terreus (strain NIH 2624 / FGSC A1156).